A 681-amino-acid chain; its full sequence is Transmembrane protein 168-A (681 aa).

9 helical membrane passes run 16-36 (FLRC…CLGM), 47-67 (MILV…ILYY), 73-93 (SASL…LCFL), 135-155 (PVVI…ASIS), 156-176 (LVFD…ALII), 184-204 (LALP…FQSL), 252-272 (FSLF…AFKL), 281-301 (VIPG…VFLV), and 346-365 (LVLF…WQVA). Residue Asn-517 is glycosylated (N-linked (GlcNAc...) asparagine).

It belongs to the TMEM168 family.

The protein resides in the nucleus membrane. Its function is as follows. Plays a key role in maintaining the cardiac electrical stability by modulating cell surface expression of SCN5A. The chain is Transmembrane protein 168-A (tmem168a) from Danio rerio (Zebrafish).